The chain runs to 249 residues: Pyridoxine 5'-phosphate synthase (249 aa).

Residue Asn10 coordinates 3-amino-2-oxopropyl phosphate. Position 12-13 (Asp12–His13) interacts with 1-deoxy-D-xylulose 5-phosphate. 3-amino-2-oxopropyl phosphate is bound at residue Arg21. The active-site Proton acceptor is His46. 1-deoxy-D-xylulose 5-phosphate-binding residues include Arg48 and His53. Glu73 (proton acceptor) is an active-site residue. Thr103 contributes to the 1-deoxy-D-xylulose 5-phosphate binding site. His194 (proton donor) is an active-site residue. Residues Gly195 and Gly216–His217 each bind 3-amino-2-oxopropyl phosphate.

This sequence belongs to the PNP synthase family. In terms of assembly, homooctamer; tetramer of dimers.

It is found in the cytoplasm. It catalyses the reaction 3-amino-2-oxopropyl phosphate + 1-deoxy-D-xylulose 5-phosphate = pyridoxine 5'-phosphate + phosphate + 2 H2O + H(+). It participates in cofactor biosynthesis; pyridoxine 5'-phosphate biosynthesis; pyridoxine 5'-phosphate from D-erythrose 4-phosphate: step 5/5. Catalyzes the complicated ring closure reaction between the two acyclic compounds 1-deoxy-D-xylulose-5-phosphate (DXP) and 3-amino-2-oxopropyl phosphate (1-amino-acetone-3-phosphate or AAP) to form pyridoxine 5'-phosphate (PNP) and inorganic phosphate. The polypeptide is Pyridoxine 5'-phosphate synthase (Rhodospirillum rubrum (strain ATCC 11170 / ATH 1.1.1 / DSM 467 / LMG 4362 / NCIMB 8255 / S1)).